Here is a 399-residue protein sequence, read N- to C-terminus: Interferon regulatory factor 9 (399 aa).

The IRF tryptophan pentad repeat DNA-binding region spans 9–116; that stretch reads TRKLRSWIVE…EPYKVYRILP (108 aa). The disordered stretch occupies residues 118–189; the sequence is GTLPNQPRNQ…CNSELEEGAG (72 aa). Residues 120-129 show a composition bias toward polar residues; that stretch reads LPNQPRNQKS. S139 bears the Phosphoserine mark. Polar residues predominate over residues 148–157; sequence NGRTNGVVNH. Residues 171–189 are compositionally biased toward low complexity; that stretch reads SNRSDSNSNCNSELEEGAG. Phosphoserine is present on S393.

Belongs to the IRF family. As to quaternary structure, interacts with STAT2 in the cytoplasm. Forms the interferon-stimulated gene factor 3 complex (ISGF3) with the heterodimer STAT1:STAT2; upon stimulation.

It is found in the nucleus. Functionally, transcription factor that plays an essential role in anti-viral immunity. It mediates signaling by type I IFNs (IFN-alpha and IFN-beta). Following type I IFN binding to cell surface receptors, Jak kinases (TYK2 and JAK1) are activated, leading to tyrosine phosphorylation of STAT1 and STAT2. IRF9/ISGF3G associates with the phosphorylated STAT1:STAT2 dimer to form a complex termed ISGF3 transcription factor, that enters the nucleus. ISGF3 binds to the IFN stimulated response element (ISRE) to activate the transcription of interferon stimulated genes, which drive the cell in an antiviral state. The protein is Interferon regulatory factor 9 (Irf9) of Mus musculus (Mouse).